Here is a 428-residue protein sequence, read N- to C-terminus: MKLITNKQGLVGNITVPGDKSMSHRSIMFGAIAEGKTVIRHFLRADDCLGTIKAFKALGVKIEETDEEIIVHGTGFDGLKQADGPLDIGNSGTTIRLMMGILAGRDFDTVILGDESIAKRPMNRVMLPLQEMGAKMHGKDGSEFAPITILGKQSLKRVEYHMPVASAQVKSAIIFAALQADGETIIHEKEKTRDHTEHMIRQFGGEIEMDGLTIRVKGGQKFIGQEMTVPGDVSSAAFFIVAGLIMPNSEIELTHVGLNPTRTGIFDVVEQMGGSLVVKDSSRSTGKLAGTVVVKSSELKGTEIGGDIIPRLIDEIPVIALLATQAEGTTIIKDAAELKVKETNRIDAVATELNKMGADITPTEDGLIIRGKTPLHAANVTSYGDHRIGMMLQIAALLVEDGDVELDRAEAVSVSYPTFFEDIRSLLK.

3-phosphoshikimate is bound by residues Lys20, Ser21, and Arg25. Lys20 serves as a coordination point for phosphoenolpyruvate. Phosphoenolpyruvate is bound by residues Gly92 and Arg120. Positions 166, 168, 314, and 341 each coordinate 3-phosphoshikimate. Position 168 (Gln168) interacts with phosphoenolpyruvate. Catalysis depends on Asp314, which acts as the Proton acceptor. Arg345 and Arg387 together coordinate phosphoenolpyruvate.

This sequence belongs to the EPSP synthase family. Monomer.

The protein localises to the cytoplasm. The enzyme catalyses 3-phosphoshikimate + phosphoenolpyruvate = 5-O-(1-carboxyvinyl)-3-phosphoshikimate + phosphate. Its pathway is metabolic intermediate biosynthesis; chorismate biosynthesis; chorismate from D-erythrose 4-phosphate and phosphoenolpyruvate: step 6/7. Catalyzes the transfer of the enolpyruvyl moiety of phosphoenolpyruvate (PEP) to the 5-hydroxyl of shikimate-3-phosphate (S3P) to produce enolpyruvyl shikimate-3-phosphate and inorganic phosphate. The sequence is that of 3-phosphoshikimate 1-carboxyvinyltransferase from Listeria welshimeri serovar 6b (strain ATCC 35897 / DSM 20650 / CCUG 15529 / CIP 8149 / NCTC 11857 / SLCC 5334 / V8).